Reading from the N-terminus, the 84-residue chain is MIKKLLIAPVRFYQRFISPAFPPSCRFRPTCSNYMIEAIQKHGAKGVLMGLARIFRCHPWSQPGEDPVPDHFSLKRNDTRKQSH.

Residues 60–84 (WSQPGEDPVPDHFSLKRNDTRKQSH) form a disordered region. Residues 68-84 (VPDHFSLKRNDTRKQSH) are compositionally biased toward basic and acidic residues.

It belongs to the UPF0161 family.

The protein localises to the cell membrane. Its function is as follows. Could be involved in insertion of integral membrane proteins into the membrane. This is Putative membrane protein insertion efficiency factor from Streptococcus gordonii (strain Challis / ATCC 35105 / BCRC 15272 / CH1 / DL1 / V288).